A 215-amino-acid polypeptide reads, in one-letter code: Sodium channel regulatory subunit beta-3 (215 aa).

The N-terminal stretch at 1–22 (MPAFNRLFPLASLVLIYWVSVC) is a signal peptide. Residues 23 to 156 (FPVCVEVPSE…EEAGEDFTSV (134 aa)) are Extracellular-facing. Cystine bridges form between Cys-26/Cys-48 and Cys-45/Cys-120. The 123-residue stretch at 32-154 (ETEAVQGNPM…VTEEAGEDFT (123 aa)) folds into the Ig-like C2-type domain. Residues Asn-95, Asn-109, Asn-113, and Asn-121 are each glycosylated (N-linked (GlcNAc...) asparagine). Residues 157–178 (VSEIMMYILLVFLTLWLLIEMI) traverse the membrane as a helical segment. The Cytoplasmic segment spans residues 179 to 215 (YCYRKVSKAEEAAQENASDYLAIPSENKENSAVPVEE).

The protein belongs to the sodium channel auxiliary subunit SCN3B (TC 8.A.17) family. In terms of assembly, a voltage-gated sodium (Nav) channel consists of an ion-conducting pore-forming alpha subunit functional on its own that is regulated by one or more beta subunits. Forms homodimers and homotrimers. SCN3B is non-covalently associated with alpha subunits and induces the formation of alpha subunit oligomers, including trimers. Interacts with SCN5A/Nav1.5; regulatory subunit of SCN5A/Nav1.5. Interacts with SCN7A/Nav2.1; probable regulatory subunit of SCN7A/Nav2.1. Interacts with SCN10A; regulatory subunit of SCN10A/Nav1.8. Interacts with NFASC; probably involved in targeting the sodium channels to the nodes of Ranvier. In terms of processing, intramolecular disulfide bonds favor the voltage-gated sodium channel oligomeric complex assembly. N-glycosylated. As to expression, expressed in the atrium.

Its subcellular location is the cell membrane. In terms of biological role, regulatory subunit of multiple voltage-gated sodium (Nav) channels directly mediating the depolarization of excitable membranes. Navs, also called VGSCs (voltage-gated sodium channels) or VDSCs (voltage-dependent sodium channels), operate by switching between closed and open conformations depending on the voltage difference across the membrane. In the open conformation they allow Na(+) ions to selectively pass through the pore, along their electrochemical gradient. The influx of Na+ ions provokes membrane depolarization, initiating the propagation of electrical signals throughout cells and tissues. The accessory beta subunits participate in localization and functional modulation of the Nav channels. Modulates the activity of SCN2A/Nav1.2, causing a hyperpolarizing shift in the voltage-dependence of inactivation of the channel and increasing the fraction of channels operating in the fast gating mode. Modulates the activity of SCN5A/Nav1.5. Could also regulate the atypical sodium channel SCN7A/Nav2.1. Modulates the activity of SCN10A/Nav1.8, regulating its oligomerization and accelerating the recovery from inactivation. The protein is Sodium channel regulatory subunit beta-3 of Homo sapiens (Human).